Consider the following 267-residue polypeptide: 2-keto-3-deoxy-L-rhamnonate aldolase (267 aa).

Histidine 49 (proton acceptor) is an active-site residue. A substrate-binding site is contributed by glutamine 151. Residue glutamate 153 participates in Mg(2+) binding. The substrate site is built by alanine 178 and aspartate 179. Residue aspartate 179 participates in Mg(2+) binding.

It belongs to the HpcH/HpaI aldolase family. KDR aldolase subfamily. Homohexamer. Mg(2+) is required as a cofactor.

It catalyses the reaction 2-dehydro-3-deoxy-L-rhamnonate = (S)-lactaldehyde + pyruvate. Catalyzes the reversible retro-aldol cleavage of 2-keto-3-deoxy-L-rhamnonate (KDR) to pyruvate and lactaldehyde. This Shigella dysenteriae serotype 1 (strain Sd197) protein is 2-keto-3-deoxy-L-rhamnonate aldolase.